The primary structure comprises 614 residues: DNA mismatch repair protein MutL (614 aa).

Residues 355-411 form a disordered region; it reads PLSTGRVSEADPSNYATQSKFDEKPRESGSQGQSSSISAPSSYSRGGEYSARSQPEL. Residues 382–401 show a composition bias toward low complexity; it reads SGSQGQSSSISAPSSYSRGG.

The protein belongs to the DNA mismatch repair MutL/HexB family.

Functionally, this protein is involved in the repair of mismatches in DNA. It is required for dam-dependent methyl-directed DNA mismatch repair. May act as a 'molecular matchmaker', a protein that promotes the formation of a stable complex between two or more DNA-binding proteins in an ATP-dependent manner without itself being part of a final effector complex. This Shewanella woodyi (strain ATCC 51908 / MS32) protein is DNA mismatch repair protein MutL.